Reading from the N-terminus, the 117-residue chain is Large ribosomal subunit protein bL20c (117 aa).

It belongs to the bacterial ribosomal protein bL20 family.

It localises to the plastid. The protein localises to the chloroplast. Its function is as follows. Binds directly to 23S ribosomal RNA and is necessary for the in vitro assembly process of the 50S ribosomal subunit. It is not involved in the protein synthesizing functions of that subunit. The protein is Large ribosomal subunit protein bL20c of Populus alba (White poplar).